Reading from the N-terminus, the 439-residue chain is Exosome complex component RRP45 (439 aa).

Residues 1 to 268 (MKETPLSNCE…AEITELILKA (268 aa)) form an ARE binding region. Position 65 is a phosphoserine (S65). K297 carries the post-translational modification N6-acetyllysine; alternate. A Glycyl lysine isopeptide (Lys-Gly) (interchain with G-Cter in SUMO1); alternate cross-link involves residue K297. A Glycyl lysine isopeptide (Lys-Gly) (interchain with G-Cter in SUMO2); alternate cross-link involves residue K297. S306, V325, S327, and S346 each carry phosphoserine. Disordered regions lie at residues 335 to 363 (GTAQIGEGVENSWGDLEDSEKEDDEGGGD) and 391 to 439 (LSDS…RAAN). The segment covering 349–361 (DLEDSEKEDDEGG) has biased composition (acidic residues). A phosphoserine mark is found at S392, S394, K409, and I411. K419 participates in a covalent cross-link: Glycyl lysine isopeptide (Lys-Gly) (interchain with G-Cter in SUMO2). Positions 425-439 (SKKPVKRRKKKRAAN) are enriched in basic residues.

Belongs to the RNase PH family. As to quaternary structure, component of the RNA exosome core complex (Exo-9), composed of EXOSC1, EXOSC2, EXOSC3, EXOSC4, EXOSC5, EXOSC6, EXOSC7, EXOSC8 and EXOSC9; within the complex interacts with EXOSC3, EXOSC4, EXOSC5 and DIS3. The catalytically inactive RNA exosome core complex (Exo-9) associates with the catalytic subunit EXOSC10/RRP6. Exo-9 may associate with DIS3 to form the nucleolar exosome complex, or DIS3L to form the cytoplasmic exosome complex. Exo-9 is formed by a hexameric base ring consisting of the heterodimers EXOSC4-EXOSC9, EXOSC5-EXOSC8 and EXOSC6-EXOSC7, and a cap ring consisting of EXOSC1, EXOSC2 and EXOSC3. The RNA exosome complex associates with cofactors C1D/RRP47, MPHOSPH6/MPP6 and MTREX/MTR4. Interacts (via C-terminus region) with SETX (via N-terminus domain); the interaction enhances SETX sumoylation. Interacts with DIS3; the interaction is direct.

Its subcellular location is the cytoplasm. It is found in the nucleus. It localises to the nucleolus. The protein resides in the nucleoplasm. Functionally, non-catalytic component of the RNA exosome complex which has 3'-&gt;5' exoribonuclease activity and participates in a multitude of cellular RNA processing and degradation events. In the nucleus, the RNA exosome complex is involved in proper maturation of stable RNA species such as rRNA, snRNA and snoRNA, in the elimination of RNA processing by-products and non-coding 'pervasive' transcripts, such as antisense RNA species and promoter-upstream transcripts (PROMPTs), and of mRNAs with processing defects, thereby limiting or excluding their export to the cytoplasm. The RNA exosome may be involved in Ig class switch recombination (CSR) and/or Ig variable region somatic hypermutation (SHM) by targeting AICDA deamination activity to transcribed dsDNA substrates. In the cytoplasm, the RNA exosome complex is involved in general mRNA turnover and specifically degrades inherently unstable mRNAs containing AU-rich elements (AREs) within their 3' untranslated regions, and in RNA surveillance pathways, preventing translation of aberrant mRNAs. It seems to be involved in degradation of histone mRNA. The catalytic inactive RNA exosome core complex of 9 subunits (Exo-9) is proposed to play a pivotal role in the binding and presentation of RNA for ribonucleolysis, and to serve as a scaffold for the association with catalytic subunits and accessory proteins or complexes. EXOSC9 binds to ARE-containing RNAs. The polypeptide is Exosome complex component RRP45 (EXOSC9) (Homo sapiens (Human)).